The following is a 138-amino-acid chain: Large ribosomal subunit protein uL16 (138 aa).

Basic residues predominate over residues Met-1–Gln-13. Positions Met-1 to Ile-20 are disordered.

This sequence belongs to the universal ribosomal protein uL16 family. In terms of assembly, part of the 50S ribosomal subunit.

In terms of biological role, binds 23S rRNA and is also seen to make contacts with the A and possibly P site tRNAs. This Paraburkholderia phytofirmans (strain DSM 17436 / LMG 22146 / PsJN) (Burkholderia phytofirmans) protein is Large ribosomal subunit protein uL16.